The primary structure comprises 811 residues: Glycerol-3-phosphate acyltransferase (811 aa).

The HXXXXD motif motif lies at C305–I310.

It belongs to the GPAT/DAPAT family.

The protein localises to the cell inner membrane. The catalysed reaction is sn-glycerol 3-phosphate + an acyl-CoA = a 1-acyl-sn-glycero-3-phosphate + CoA. It functions in the pathway phospholipid metabolism; CDP-diacylglycerol biosynthesis; CDP-diacylglycerol from sn-glycerol 3-phosphate: step 1/3. This is Glycerol-3-phosphate acyltransferase from Histophilus somni (strain 129Pt) (Haemophilus somnus).